The chain runs to 643 residues: Threonine--tRNA ligase (643 aa).

One can recognise a TGS domain in the interval 1–61 (MIKVSLKDGS…NEDVSLSICT (61 aa)). A catalytic region spans residues 240 to 540 (DHNKLGRELK…LIEKYAGAFP (301 aa)). Zn(2+) contacts are provided by cysteine 335, histidine 386, and histidine 517.

It belongs to the class-II aminoacyl-tRNA synthetase family. As to quaternary structure, homodimer. Zn(2+) is required as a cofactor.

The protein localises to the cytoplasm. It carries out the reaction tRNA(Thr) + L-threonine + ATP = L-threonyl-tRNA(Thr) + AMP + diphosphate + H(+). Catalyzes the attachment of threonine to tRNA(Thr) in a two-step reaction: L-threonine is first activated by ATP to form Thr-AMP and then transferred to the acceptor end of tRNA(Thr). Also edits incorrectly charged L-seryl-tRNA(Thr). The chain is Threonine--tRNA ligase from Clostridium botulinum (strain Alaska E43 / Type E3).